A 339-amino-acid chain; its full sequence is Fructose-1,6-bisphosphatase class 1 (339 aa).

Residues E91, D113, L115, and D116 each coordinate Mg(2+). Residues 116 to 119, N208, and K274 each bind substrate; that span reads DGSS. E280 provides a ligand contact to Mg(2+).

Belongs to the FBPase class 1 family. As to quaternary structure, homotetramer. It depends on Mg(2+) as a cofactor.

Its subcellular location is the cytoplasm. It carries out the reaction beta-D-fructose 1,6-bisphosphate + H2O = beta-D-fructose 6-phosphate + phosphate. Its pathway is carbohydrate biosynthesis; gluconeogenesis. The protein is Fructose-1,6-bisphosphatase class 1 of Cupriavidus pinatubonensis (strain JMP 134 / LMG 1197) (Cupriavidus necator (strain JMP 134)).